Consider the following 163-residue polypeptide: Allophycocyanin alpha-B chain (163 aa).

Residue Asn-71 is modified to N4-methylasparagine. Cys-81 serves as a coordination point for (2R,3E)-phycocyanobilin.

The protein belongs to the phycobiliprotein family. Contains one covalently linked bilin chromophore.

Its subcellular location is the plastid. It localises to the chloroplast thylakoid membrane. Allophycocyanin is a photosynthetic bile pigment-protein complex with maximum absorption at approximately 650 nanometers. The polypeptide is Allophycocyanin alpha-B chain (apcD) (Cyanidium caldarium (Red alga)).